The following is a 350-amino-acid chain: GTP 3',8-cyclase (350 aa).

Residues 27–245 (TFGRIATDLR…LRAHFTLVPD (219 aa)) form the Radical SAM core domain. GTP is bound at residue Arg-36. The [4Fe-4S] cluster site is built by Cys-43 and Cys-47. Tyr-49 is a binding site for S-adenosyl-L-methionine. Position 50 (Cys-50) interacts with [4Fe-4S] cluster. Residue Arg-87 participates in GTP binding. An S-adenosyl-L-methionine-binding site is contributed by Gly-91. Position 118 (Thr-118) interacts with GTP. Ser-142 provides a ligand contact to S-adenosyl-L-methionine. A GTP-binding site is contributed by Lys-179. Residue Met-213 coordinates S-adenosyl-L-methionine. The [4Fe-4S] cluster site is built by Cys-277 and Cys-280. GTP is bound at residue 282 to 284 (RTR). Cys-294 provides a ligand contact to [4Fe-4S] cluster.

The protein belongs to the radical SAM superfamily. MoaA family. In terms of assembly, monomer and homodimer. It depends on [4Fe-4S] cluster as a cofactor.

The enzyme catalyses GTP + AH2 + S-adenosyl-L-methionine = (8S)-3',8-cyclo-7,8-dihydroguanosine 5'-triphosphate + 5'-deoxyadenosine + L-methionine + A + H(+). The protein operates within cofactor biosynthesis; molybdopterin biosynthesis. Functionally, catalyzes the cyclization of GTP to (8S)-3',8-cyclo-7,8-dihydroguanosine 5'-triphosphate. This Mycobacterium sp. (strain JLS) protein is GTP 3',8-cyclase.